Consider the following 651-residue polypeptide: BTB/POZ domain-containing protein At3g44820 (651 aa).

One can recognise a BTB domain in the interval 25–96; sequence SDITVVVDDV…CYGARVDITS (72 aa). Residues 211-509 enclose the NPH3 domain; the sequence is DWWYEDISYL…LQVLFFEQMH (299 aa). A disordered region spans residues 611–651; that stretch reads DAKNDTVQNSVSSTPRSATADHTLPRSSRHSKHRKSFSFFG. Residues 615–627 are compositionally biased toward polar residues; it reads DTVQNSVSSTPRS. Residues 637-651 show a composition bias toward basic residues; it reads SSRHSKHRKSFSFFG.

This sequence belongs to the NPH3 family.

The protein operates within protein modification; protein ubiquitination. May act as a substrate-specific adapter of an E3 ubiquitin-protein ligase complex (CUL3-RBX1-BTB) which mediates the ubiquitination and subsequent proteasomal degradation of target proteins. This Arabidopsis thaliana (Mouse-ear cress) protein is BTB/POZ domain-containing protein At3g44820.